A 186-amino-acid polypeptide reads, in one-letter code: Adenylyl-sulfate kinase (186 aa).

Residue 17–24 participates in ATP binding; sequence GLSGAGKT. Catalysis depends on serine 91, which acts as the Phosphoserine intermediate.

Belongs to the APS kinase family.

It carries out the reaction adenosine 5'-phosphosulfate + ATP = 3'-phosphoadenylyl sulfate + ADP + H(+). It participates in sulfur metabolism; hydrogen sulfide biosynthesis; sulfite from sulfate: step 2/3. Its function is as follows. Catalyzes the synthesis of activated sulfate. The sequence is that of Adenylyl-sulfate kinase from Chloroflexus aurantiacus (strain ATCC 29364 / DSM 637 / Y-400-fl).